Reading from the N-terminus, the 218-residue chain is DNA-binding protein HU 2 (218 aa).

Residues 1 to 91 (MNKAQLVEAI…QGFKDLVSGS (91 aa)) form a bacterial histone-like domain region. Positions 101-218 (VKKAPKGSLS…TAKKATARKK (118 aa)) are disordered. The tract at residues 118–218 (KAAGKKAAAK…TAKKATARKK (101 aa)) is degenerate repeats region. The segment covering 127–161 (KKATGAAKKTTGAAKKTSAAAKKTTAKKTTGAAKT) has biased composition (low complexity). Basic residues predominate over residues 162-172 (TAKKTTAKKSA). Over residues 173 to 182 (AKTTTAAAKK) the composition is skewed to low complexity. Basic residues predominate over residues 183 to 218 (TAAKKAPAKKATAKKAPAKKSTARKTTAKKATARKK).

This sequence belongs to the bacterial histone-like protein family. Long actinobacterial subfamily. As to quaternary structure, homodimer.

It localises to the cytoplasm. It is found in the nucleoid. In terms of biological role, histone-like DNA-binding protein which is capable of wrapping DNA to stabilize it, and thus to prevent its denaturation under extreme environmental conditions. The sequence is that of DNA-binding protein HU 2 (hup2) from Streptomyces coelicolor (strain ATCC BAA-471 / A3(2) / M145).